The sequence spans 826 residues: ATTTTTTHNSKNKQYLAKQKPVELTLGYQNPNGCKVCSFGSKGSIYQKVSSGFKGVSVMTDDKSTMPSVEEDFENIGILNVDSSLEPFKDHFKYRLKRYLHQKKLIEEYEGGLQEFAKGYLKFGFNREEDGISYREWAPAAQEAQIIGDFNGWNGSNLHMEKDQFGVWSIQIPDADGNPAIPHNSRVKFRFKHSDGVWVDRIPAWIKYATVDPTRFAAPYDGVYWDPPLSERYQFKHPRPPKPKAPRIYEAHVGMSSSEPRINSYREFADDVLPRIRENNYNTVQLMAVMEHSYYASFWYHVTKPFFAVSSRSGSPEDLKYLIDKAHSLGLNVLMDVIHSHASNNVTDGLNGFDVGQSSQQSYFHAGDRGYHKLWDSRLFNYANWKSSFLLSNLRWWLEEYKFDGFRFDGVTSMLYHHHGINMAFTGDYNEYFSEETDVDAVVYLMLANSLVHDILPDATDIAEDVSGMPGLGRPVSEVGIGFDYRLAMAIPDKWIDYLKNKKDSEWSMKEISLNLTNRRYTEKCVSYAESHDQSIVGDKTIAFLLMDEEMYSSMSCLTMLSPTIERGISLHKMIHFITLALGGEGYLNFMGNEFGHPEWIDFPREGNGWSYEKCRLTQWNLVDTNHLRYKFMNAFDRAMNLLDDKFSILASTKQIVSSTNNEDKVIVFERGDLVFVFNFHPENTYEGYKVGCDLPGKYRVALDSDATEFGGHGRVGHDADQFTSPEGIPGIPETNFNNRPNSFKVLSPPHTCVVYYRVDERQEESNNPNLGSVEETFAAADTDVARIPDVSMESEDSNLDRIEDNSEDAVDAGILKVEREVVGDN.

The N-terminal 58 residues, 1-58, are a transit peptide targeting the chloroplast; it reads ATTTTTTHNSKNKQYLAKQKPVELTLGYQNPNGCKVCSFGSKGSIYQKVSSGFKGVSV. Residue Asp-409 is the Nucleophile of the active site. The Proton donor role is filled by Glu-464. Residues 782-813 form a disordered region; the sequence is DTDVARIPDVSMESEDSNLDRIEDNSEDAVDA.

The protein belongs to the glycosyl hydrolase 13 family. GlgB subfamily. As to quaternary structure, monomer. Expressed in roots, leaves, stipules, pods and flowers.

The protein localises to the plastid. Its subcellular location is the chloroplast. It localises to the amyloplast. The catalysed reaction is Transfers a segment of a (1-&gt;4)-alpha-D-glucan chain to a primary hydroxy group in a similar glucan chain.. It functions in the pathway glycan biosynthesis; starch biosynthesis. In terms of biological role, catalyzes the formation of the alpha-1,6-glucosidic linkages in starch by scission of a 1,4-alpha-linked oligosaccharide from growing alpha-1,4-glucan chains and the subsequent attachment of the oligosaccharide to the alpha-1,6 position. May preferentially transfer long chains during branching. The protein is 1,4-alpha-glucan-branching enzyme 1, chloroplastic/amyloplastic (SBEII) of Pisum sativum (Garden pea).